The primary structure comprises 328 residues: MSKSPVRVAVTGAAGQIGYALLFRIASGEMLGKDQPVILQLLEVPVEKAQEALKGVIMELEDCAFPLLAGIEAHSDPMTAFKDTDYALLVGARPRGPGMERADLLAANAQIFTAQGKALNAVASRNVKVLVVGNPANTNAYIAMKSAPDLPAKNFTAMLRLDHNRAASQIAAKTGKPVASIEKLAVWGNHSPTMYADYRFATIGGESVKDMINDDVWNRDVFLPTVGKRGAAIIAARGVSSAASAANAAIDHMRDWALGTNGAWVTMGVPSKGEYGIPAETMFGYPVTCEGGEYKIVEGLPIDAFSQECINKTLAELEGEKDGVKHLL.

Residue 12–18 coordinates NAD(+); it reads GAAGQIG. Arg-95 and Arg-101 together coordinate substrate. NAD(+) contacts are provided by residues Asn-108, Gln-115, and 132 to 134; that span reads VGN. The substrate site is built by Asn-134 and Arg-165. His-190 functions as the Proton acceptor in the catalytic mechanism.

Belongs to the LDH/MDH superfamily. MDH type 2 family.

The catalysed reaction is (S)-malate + NAD(+) = oxaloacetate + NADH + H(+). Functionally, catalyzes the reversible oxidation of malate to oxaloacetate. In Leptothrix cholodnii (strain ATCC 51168 / LMG 8142 / SP-6) (Leptothrix discophora (strain SP-6)), this protein is Malate dehydrogenase.